We begin with the raw amino-acid sequence, 75 residues long: UPF0352 protein YejL (75 aa).

It belongs to the UPF0352 family.

This chain is UPF0352 protein YejL, found in Salmonella arizonae (strain ATCC BAA-731 / CDC346-86 / RSK2980).